The sequence spans 268 residues: Zinc finger protein SNAI2 (268 aa).

The segment at 1 to 20 (MPRSFLVKKHFNASKKPNYS) is SNAG domain. The interval 80 to 117 (SSSLGRVSPPPPSDTSSKDHSGSESPISDEEERLQSKL) is disordered. C2H2-type zinc fingers lie at residues 128 to 150 (FQCNLCNKTYSTFSGLAKHKQLH), 159 to 181 (FSCKYCDKEYVSLGALKMHIRTH), 185 to 207 (CVCKICGKAFSRPWLLQGHIRTH), and 213 to 235 (FSCPHCNRAFADRSNLRAHLQTH). A C2H2-type 5; atypical zinc finger spans residues 241–264 (YQCKNCSKTFSRMSLLHKHEESGC).

It belongs to the snail C2H2-type zinc-finger protein family. As to quaternary structure, interacts (via SNAG domain) with LIMD1 (via LIM domains), WTIP (via LIM domains) and AJUBA (via LIM domains). Interacts (via zinc fingers) with KPNA2, KPNB1, and TNPO1. May interact (via zinc fingers) with IPO7. Phosphorylated by GSK3B. Once phosphorylated, it becomes a target for ubiquitination. In terms of processing, ubiquitinated by the SCF(FBXO11) complex; ubiquitination requires previous GSK3B-mediated SNAI2 phosphorylation. Expressed in most adult human tissues, including spleen, thymus, prostate, testis, ovary, small intestine, colon, heart, brain, placenta, lung, liver, skeletal muscle, kidney and pancreas. Not detected in peripheral blood leukocyte. Expressed in the dermis and in all layers of the epidermis, with high levels of expression in the basal layers (at protein level). Expressed in osteoblasts (at protein level). Expressed in mesenchymal stem cells (at protein level). Expressed in breast tumor cells (at protein level).

The protein resides in the nucleus. The protein localises to the cytoplasm. In terms of biological role, transcriptional repressor that modulates both activator-dependent and basal transcription. Involved in the generation and migration of neural crest cells. Plays a role in mediating RAF1-induced transcriptional repression of the TJ protein, occludin (OCLN) and subsequent oncogenic transformation of epithelial cells. Represses BRCA2 expression by binding to its E2-box-containing silencer and recruiting CTBP1 and HDAC1 in breast cells. In epidermal keratinocytes, binds to the E-box in ITGA3 promoter and represses its transcription. Involved in the regulation of ITGB1 and ITGB4 expression and cell adhesion and proliferation in epidermal keratinocytes. Binds to E-box2 domain of BSG and activates its expression during TGFB1-induced epithelial-mesenchymal transition (EMT) in hepatocytes. Represses E-Cadherin/CDH1 transcription via E-box elements. Involved in osteoblast maturation. Binds to RUNX2 and SOC9 promoters and may act as a positive and negative transcription regulator, respectively, in osteoblasts. Binds to CXCL12 promoter via E-box regions in mesenchymal stem cells and osteoblasts. Plays an essential role in TWIST1-induced EMT and its ability to promote invasion and metastasis. This is Zinc finger protein SNAI2 (SNAI2) from Homo sapiens (Human).